We begin with the raw amino-acid sequence, 1578 residues long: BRD4-interacting chromatin-remodeling complex-associated protein (1578 aa).

Disordered stretches follow at residues 80–101, 631–673, and 725–951; these read DILG…DQPC, PAVT…PSLA, and IVSA…PPPR. Positions 86–96 are enriched in gly residues; that stretch reads AAGGGGGGGGA. Composition is skewed to low complexity over residues 631–662 and 764–782; these read PAVT…TQPQ and IPAA…PSLP. 3 stretches are compositionally biased toward pro residues: residues 793 to 816, 824 to 841, and 865 to 888; these read MPSP…PPSQ, PSEP…PPTL, and PGPP…PASH. Residues 889–906 show a composition bias toward low complexity; the sequence is LPPASTPSAVASSSEPSA. Position 929 is a phosphoserine (Ser-929). At Thr-931 the chain carries Phosphothreonine. Residues 942–951 are compositionally biased toward pro residues; sequence PTAPPPPPPR. N6-acetyllysine is present on Lys-1067. The interval 1206 to 1316 is disordered; sequence EKPDEYVSSS…NRPPIKTYEA (111 aa). 2 stretches are compositionally biased toward low complexity: residues 1233-1247 and 1275-1294; these read SHGQ…GTSA and ASSS…AASS. A Glycyl lysine isopeptide (Lys-Gly) (interchain with G-Cter in SUMO2) cross-link involves residue Lys-1327. Disordered regions lie at residues 1342–1435 and 1457–1578; these read DPVH…PTKV and VLKG…TLNR. A compositionally biased stretch (pro residues) spans 1346–1370; that stretch reads QPLPAPTPAKGAEPPPHPAPPPLPP. At Ser-1427 the chain carries Phosphoserine. Polar residues predominate over residues 1502-1532; sequence ASFSSDSPQDDTLTEHLQSAIDSILNLQQAP. Over residues 1538 to 1553 the composition is skewed to pro residues; that stretch reads GPYPHTGPTPGTPTSP.

As to quaternary structure, component of the multiprotein chromatin-remodeling complexes SWI/SNF: SWI/SNF-A (BAF), SWI/SNF-B (PBAF) and related complexes. The canonical complex contains a catalytic subunit (either SMARCA4/BRG1/BAF190A or SMARCA2/BRM/BAF190B) and at least SMARCE1, ACTL6A/BAF53, SMARCC1/BAF155, SMARCC2/BAF170, and SMARCB1/SNF5/BAF47. Other subunits specific to each of the complexes may also be present permitting several possible combinations developmentally and tissue specific. Component of the SWI/SNF (GBAF) subcomplex, which includes at least BICRA or BICRAL (mutually exclusive), BRD9, SS18, the core BAF subunits, SMARCA2/BRM, SMARCA4/BRG1/BAF190A, ACTL6A/BAF53, SMARCC1/BAF155, and SMARCD1/BAF60A. Interacts with BRD4; the interaction bridges BRD4 to the GBAF complex.

The protein localises to the nucleus. Functionally, component of SWI/SNF chromatin remodeling subcomplex GBAF that carries out key enzymatic activities, changing chromatin structure by altering DNA-histone contacts within a nucleosome in an ATP-dependent manner. May play a role in BRD4-mediated gene transcription. The sequence is that of BRD4-interacting chromatin-remodeling complex-associated protein from Mus musculus (Mouse).